The chain runs to 93 residues: Integration host factor subunit beta (93 aa).

It belongs to the bacterial histone-like protein family. Heterodimer of an alpha and a beta chain.

Its function is as follows. This protein is one of the two subunits of integration host factor, a specific DNA-binding protein that functions in genetic recombination as well as in transcriptional and translational control. The sequence is that of Integration host factor subunit beta from Vibrio vulnificus (strain YJ016).